Here is a 177-residue protein sequence, read N- to C-terminus: tRNA-splicing endonuclease (177 aa).

Active-site residues include Tyr-114, His-123, and Lys-154.

This sequence belongs to the tRNA-intron endonuclease family. Archaeal short subfamily. Homotetramer; although the tetramer contains four active sites, only two participate in the cleavage. Therefore, it should be considered as a dimer of dimers.

It carries out the reaction pretRNA = a 3'-half-tRNA molecule with a 5'-OH end + a 5'-half-tRNA molecule with a 2',3'-cyclic phosphate end + an intron with a 2',3'-cyclic phosphate and a 5'-hydroxyl terminus.. Functionally, endonuclease that removes tRNA introns. Cleaves pre-tRNA at the 5'- and 3'-splice sites to release the intron. The products are an intron and two tRNA half-molecules bearing 2',3' cyclic phosphate and 5'-OH termini. Recognizes a pseudosymmetric substrate in which 2 bulged loops of 3 bases are separated by a stem of 4 bp. The polypeptide is tRNA-splicing endonuclease (Methanococcus vannielii (strain ATCC 35089 / DSM 1224 / JCM 13029 / OCM 148 / SB)).